Here is a 177-residue protein sequence, read N- to C-terminus: Large ribosomal subunit protein uL6 (177 aa).

This sequence belongs to the universal ribosomal protein uL6 family. Part of the 50S ribosomal subunit.

Functionally, this protein binds to the 23S rRNA, and is important in its secondary structure. It is located near the subunit interface in the base of the L7/L12 stalk, and near the tRNA binding site of the peptidyltransferase center. This Idiomarina loihiensis (strain ATCC BAA-735 / DSM 15497 / L2-TR) protein is Large ribosomal subunit protein uL6.